A 174-amino-acid polypeptide reads, in one-letter code: Mitochondrial holo-[acyl-carrier-protein] synthase (174 aa).

It belongs to the P-Pant transferase superfamily. AcpS family.

It is found in the mitochondrion. It catalyses the reaction apo-[ACP] + CoA = holo-[ACP] + adenosine 3',5'-bisphosphate + H(+). Functionally, transfers the 4'-phosphopantetheine moiety from coenzyme A to a Ser of mitochondrial acyl-carrier-protein. The chain is Mitochondrial holo-[acyl-carrier-protein] synthase (PPT2) from Eremothecium gossypii (strain ATCC 10895 / CBS 109.51 / FGSC 9923 / NRRL Y-1056) (Yeast).